The following is a 215-amino-acid chain: MFAVIFETRPQPSQFDTYLTIAKSLRPELANIDGFIENIRYKSLSRPGWILSLSFWRDEKSLVRWRTTATHHMAQEKGRDGVLEDYHLRVGQVTASVRSNEVKRVETVDAREQDDVTAVGAAKTVQLVRFQMDRGAGIDAAAGKLGLNPEEPRGLLAWDIMEAVLSPGDMILLASWETGSSSVSIPGADSDEVQVLRDYGKYDRREAPQFYPPAS.

The 89-residue stretch at 2–90 (FAVIFETRPQ…GVLEDYHLRV (89 aa)) folds into the ABM domain.

Its subcellular location is the endoplasmic reticulum. It is found in the secreted. It carries out the reaction jasmonate + NADPH + O2 + H(+) = (1R,2R)-12-hydroxyjasmonate + NADP(+) + H2O. Its function is as follows. Monooxygenase that converts the endogenous (and likely the host) jasmonate (JA) to its hydroxylated derivative 12-hydroxyjasmonate (12OH-JA), also known as tuberonic acid, a compound that attenuates or disables jasmonate-based host innate immunity and which is essential for proper initiation and elaboration of the blast disease in rice. ABM, together with a polyketide synthase MGG_04775 and the esterase MGG_04774, share the secondary metabolism gene cluster with ABC transporter ABC3, and therefore may also be involved in the synthesis of other important metabolites such as the ABC3 transporter efflux substrate (ATS) and/or additional polyketides. This Pyricularia oryzae (strain 70-15 / ATCC MYA-4617 / FGSC 8958) (Rice blast fungus) protein is Jasmonate monooxygenase ABM.